Consider the following 446-residue polypeptide: DNA repair protein RadA (446 aa).

A C4-type zinc finger spans residues 10–27; sequence CSNCGNTSPKWSGQCFDC. 91-98 is an ATP binding site; that stretch reads GDPGIGKS. Residues 250 to 254 carry the RadA KNRFG motif motif; it reads KNRFG. Residues 349-446 are lon-protease-like; sequence EVYLSIAGGL…HLKDLKEIIR (98 aa).

This sequence belongs to the RecA family. RadA subfamily.

Functionally, DNA-dependent ATPase involved in processing of recombination intermediates, plays a role in repairing DNA breaks. Stimulates the branch migration of RecA-mediated strand transfer reactions, allowing the 3' invading strand to extend heteroduplex DNA faster. Binds ssDNA in the presence of ADP but not other nucleotides, has ATPase activity that is stimulated by ssDNA and various branched DNA structures, but inhibited by SSB. Does not have RecA's homology-searching function. The protein is DNA repair protein RadA of Rickettsia felis (strain ATCC VR-1525 / URRWXCal2) (Rickettsia azadi).